Consider the following 639-residue polypeptide: Wall-associated receptor kinase-like 15 (639 aa).

The signal sequence occupies residues 1-25 (MELPWLSLTTFTLSLLIYFSSTTQA). Residues 26-282 (FKRCPNCGST…KRKSCKRWSN (257 aa)) lie on the Extracellular side of the membrane. Residues Asn-68, Asn-115, Asn-126, Asn-141, and Asn-241 are each glycosylated (N-linked (GlcNAc...) asparagine). A helical transmembrane segment spans residues 283–303 (LPLLGGLAGGVGAILIAGFIT). Topologically, residues 304–639 (KTIVSKQNRR…KEIENILHGI (336 aa)) are cytoplasmic. Positions 354–639 (FAKSNLLGFG…KEIENILHGI (286 aa)) constitute a Protein kinase domain. ATP contacts are provided by residues 360–368 (LGFGGFGEV) and Lys-382. Catalysis depends on Asp-484, which acts as the Proton acceptor.

Belongs to the protein kinase superfamily. Ser/Thr protein kinase family.

The protein localises to the membrane. The enzyme catalyses L-seryl-[protein] + ATP = O-phospho-L-seryl-[protein] + ADP + H(+). It catalyses the reaction L-threonyl-[protein] + ATP = O-phospho-L-threonyl-[protein] + ADP + H(+). In terms of biological role, putative serine/threonine-protein kinase that may function as a signaling receptor of extracellular matrix component. This is Wall-associated receptor kinase-like 15 (WAKL15) from Arabidopsis thaliana (Mouse-ear cress).